The primary structure comprises 247 residues: tRNA uridine(34) hydroxylase (247 aa).

Positions 124 to 218 (TKQNVIVIDT…YLEDTQNKNN (95 aa)) constitute a Rhodanese domain. Cys178 (cysteine persulfide intermediate) is an active-site residue.

This sequence belongs to the TrhO family.

It carries out the reaction uridine(34) in tRNA + AH2 + O2 = 5-hydroxyuridine(34) in tRNA + A + H2O. Functionally, catalyzes oxygen-dependent 5-hydroxyuridine (ho5U) modification at position 34 in tRNAs. The protein is tRNA uridine(34) hydroxylase of Rickettsia akari (strain Hartford).